Reading from the N-terminus, the 138-residue chain is Large ribosomal subunit protein uL16 (138 aa).

The interval 1-22 (MQQPARTKYRKQQKGRNKGIAT) is disordered. Residues 7-17 (TKYRKQQKGRN) show a composition bias toward basic residues.

This sequence belongs to the universal ribosomal protein uL16 family. As to quaternary structure, part of the 50S ribosomal subunit.

Binds 23S rRNA and is also seen to make contacts with the A and possibly P site tRNAs. This Nitrosospira multiformis (strain ATCC 25196 / NCIMB 11849 / C 71) protein is Large ribosomal subunit protein uL16.